Here is a 322-residue protein sequence, read N- to C-terminus: Ferredoxin--NADP reductase (322 aa).

D34, Q42, Y47, V87, F120, D279, and T320 together coordinate FAD.

The protein belongs to the ferredoxin--NADP reductase type 2 family. As to quaternary structure, homodimer. FAD serves as cofactor.

The catalysed reaction is 2 reduced [2Fe-2S]-[ferredoxin] + NADP(+) + H(+) = 2 oxidized [2Fe-2S]-[ferredoxin] + NADPH. In Streptococcus pneumoniae serotype 19F (strain G54), this protein is Ferredoxin--NADP reductase.